We begin with the raw amino-acid sequence, 271 residues long: Tumor necrosis factor receptor superfamily member 4 (271 aa).

Positions 1–19 are cleaved as a signal peptide; that stretch reads MYVWVQQPTAFLLLGLSLG. Residues 20–210 lie on the Extracellular side of the membrane; the sequence is VTVKLNCVKD…TPTLVAPEGP (191 aa). TNFR-Cys repeat units follow at residues 25–60 and 61–102; these read NCVKDTYPSGHKCCRECQPGHGMVSRCDHTRDTVCH and PCEP…DTVC. 8 disulfides stabilise this stretch: cysteine 26/cysteine 37, cysteine 38/cysteine 51, cysteine 41/cysteine 59, cysteine 62/cysteine 76, cysteine 79/cysteine 94, cysteine 82/cysteine 102, cysteine 104/cysteine 122, and cysteine 125/cysteine 138. A TNFR-Cys 3; truncated repeat occupies 103–123; sequence QCRPGTQPRQDSSHKLGVDCV. One copy of the TNFR-Cys 4 repeat lies at 124–164; the sequence is PCPPGHFSPGSNQACKPWTNCTLSGKQIRHPASNSLDTVCE. Asparagine 143 carries N-linked (GlcNAc...) asparagine glycosylation. A disulfide bridge connects residues cysteine 144 and cysteine 163. Residues 211–235 form a helical membrane-spanning segment; that stretch reads AFAVILGLGLGLLAPLTVLLALYLL. Topologically, residues 236–271 are cytoplasmic; sequence RKAWRSPNTPKPCWGNSFRTPIQEEQTDTHFTLAKI.

In terms of assembly, interacts with TRAF2, TRAF3 and TRAF5. In terms of tissue distribution, activated T-cells.

It localises to the membrane. Functionally, receptor for TNFSF4/OX40L/GP34. Is a costimulatory molecule implicated in long-term T-cell immunity. This Rattus norvegicus (Rat) protein is Tumor necrosis factor receptor superfamily member 4 (Tnfrsf4).